The chain runs to 392 residues: Anhydro-N-acetylmuramic acid kinase (392 aa).

Residue 19–26 (GTSVDGID) coordinates ATP.

The protein belongs to the anhydro-N-acetylmuramic acid kinase family.

The catalysed reaction is 1,6-anhydro-N-acetyl-beta-muramate + ATP + H2O = N-acetyl-D-muramate 6-phosphate + ADP + H(+). The protein operates within amino-sugar metabolism; 1,6-anhydro-N-acetylmuramate degradation. It functions in the pathway cell wall biogenesis; peptidoglycan recycling. Catalyzes the specific phosphorylation of 1,6-anhydro-N-acetylmuramic acid (anhMurNAc) with the simultaneous cleavage of the 1,6-anhydro ring, generating MurNAc-6-P. Is required for the utilization of anhMurNAc either imported from the medium or derived from its own cell wall murein, and thus plays a role in cell wall recycling. The chain is Anhydro-N-acetylmuramic acid kinase from Trichormus variabilis (strain ATCC 29413 / PCC 7937) (Anabaena variabilis).